We begin with the raw amino-acid sequence, 574 residues long: Avenacosidase 1 (574 aa).

The N-terminal 55 residues, 1–55 (MALLCSALSNSTHPSFRSHIGANSENLWHLSADPAQKSKRRCNLTLSSRAARISS), are a transit peptide targeting the chloroplast. A beta-D-glucoside is bound by residues glutamine 88, histidine 192, and 237 to 238 (NE). The active-site Proton donor is glutamate 238. Cysteine 258 and cysteine 264 are oxidised to a cystine. A beta-D-glucoside-binding positions include tyrosine 381, glutamate 454, tryptophan 505, 512–513 (EW), and phenylalanine 521. Catalysis depends on glutamate 454, which acts as the Nucleophile.

Belongs to the glycosyl hydrolase 1 family. In terms of assembly, homo- and heteromultimer with P60B in a 1:1 stoichiometry. Aggregates to form the fibrillar stromacentre. Expressed in caryopses, coleoptiles, primary leaves, and etiolated and green seedlings, but not in roots.

The protein localises to the plastid. It localises to the chloroplast stroma. It carries out the reaction avenacoside B + H2O = 26-desgluco-avenacoside B + D-glucose. Inhibited by N-(3-Dimethylaminopropyl)-N'-ethylcarbodiimide hydrochloride (EDC). Functionally, beta-glucosidase acting as a preformed defense system. Hydrolyzes the bisdesmosides avenacosides A and B to 26-desgluco-avenacosides exhibiting fungicidal activity. Can use beta-fucoside &gt; beta-glucoside &gt; beta-galactoside &gt; beta-xyloside as substrates, but not alpha-glycosides, beta-thioglucosides and disaccharides. This chain is Avenacosidase 1 (P60A), found in Avena sativa (Oat).